The following is a 245-amino-acid chain: tRNA pseudouridine synthase A (245 aa).

Catalysis depends on Asp-52, which acts as the Nucleophile. Position 111 (Tyr-111) interacts with substrate.

It belongs to the tRNA pseudouridine synthase TruA family. In terms of assembly, homodimer.

It carries out the reaction uridine(38/39/40) in tRNA = pseudouridine(38/39/40) in tRNA. Formation of pseudouridine at positions 38, 39 and 40 in the anticodon stem and loop of transfer RNAs. The polypeptide is tRNA pseudouridine synthase A (Afipia carboxidovorans (strain ATCC 49405 / DSM 1227 / KCTC 32145 / OM5) (Oligotropha carboxidovorans)).